Consider the following 115-residue polypeptide: Photosystem II reaction center Psb28 protein (115 aa).

This sequence belongs to the Psb28 family. Part of the photosystem II complex.

It localises to the plastid. It is found in the chloroplast thylakoid membrane. This Pyropia yezoensis (Susabi-nori) protein is Photosystem II reaction center Psb28 protein.